We begin with the raw amino-acid sequence, 332 residues long: Ribosomal RNA small subunit methyltransferase C (332 aa).

Belongs to the methyltransferase superfamily. RsmC family. As to quaternary structure, monomer.

The protein resides in the cytoplasm. It carries out the reaction guanosine(1207) in 16S rRNA + S-adenosyl-L-methionine = N(2)-methylguanosine(1207) in 16S rRNA + S-adenosyl-L-homocysteine + H(+). Functionally, specifically methylates the guanine in position 1207 of 16S rRNA in the 30S particle. This chain is Ribosomal RNA small subunit methyltransferase C, found in Stutzerimonas stutzeri (strain A1501) (Pseudomonas stutzeri).